A 184-amino-acid polypeptide reads, in one-letter code: ATP synthase subunit b, chloroplastic (184 aa).

A helical transmembrane segment spans residues 27–49 (LATNLINLSVVLGVLVFFGKGVL).

Belongs to the ATPase B chain family. F-type ATPases have 2 components, F(1) - the catalytic core - and F(0) - the membrane proton channel. F(1) has five subunits: alpha(3), beta(3), gamma(1), delta(1), epsilon(1). F(0) has four main subunits: a(1), b(1), b'(1) and c(10-14). The alpha and beta chains form an alternating ring which encloses part of the gamma chain. F(1) is attached to F(0) by a central stalk formed by the gamma and epsilon chains, while a peripheral stalk is formed by the delta, b and b' chains.

It is found in the plastid. Its subcellular location is the chloroplast thylakoid membrane. In terms of biological role, f(1)F(0) ATP synthase produces ATP from ADP in the presence of a proton or sodium gradient. F-type ATPases consist of two structural domains, F(1) containing the extramembraneous catalytic core and F(0) containing the membrane proton channel, linked together by a central stalk and a peripheral stalk. During catalysis, ATP synthesis in the catalytic domain of F(1) is coupled via a rotary mechanism of the central stalk subunits to proton translocation. Component of the F(0) channel, it forms part of the peripheral stalk, linking F(1) to F(0). This is ATP synthase subunit b, chloroplastic from Cicer arietinum (Chickpea).